Here is a 416-residue protein sequence, read N- to C-terminus: Lactose permease (416 aa).

The Cytoplasmic portion of the chain corresponds to 1-13 (MYYLKNTNFWMFG). The chain crosses the membrane as a helical span at residues 14–34 (FFFFFYFFIMGAYFPFFPIWL). At 35-45 (HEVNHISKGDT) the chain is on the periplasmic side. The helical transmembrane segment at 46–66 (GIIFACISLFSLLFQPIFGLL) threads the bilayer. Over 67-75 (SDKLGLRKH) the chain is Cytoplasmic. The chain crosses the membrane as a helical span at residues 76–96 (LLWVITGMLVMFAPFFIYVFG). A topological domain (periplasmic) is located at residue Pro-97. The helical transmembrane segment at 98 to 118 (LLQVNILLGSIVGGIYLGFIY) threads the bilayer. Topologically, residues 119-144 (NAGAPAIEAYIEKASRRSNFEFGRAR) are cytoplasmic. Residues 145-165 (MFGCVGWALCASIAGIMFTIN) form a helical membrane-spanning segment. A topological domain (periplasmic) is located at residue Asn-166. A helical membrane pass occupies residues 167 to 187 (QFVFWLGSGCAVILALLLLFS). At 188 to 211 (KTDVPSSAKVADAVGANNSAFSLK) the chain is on the cytoplasmic side. Residues 212-232 (LALELFKQPKLWLISLYVVGV) traverse the membrane as a helical segment. Residues 233–262 (SCTYDVFDQQFANFFTSFFATGEQGTRVFG) are Periplasmic-facing. Residues 263-283 (YVTTMGELLNASIMFFAPLIV) form a helical membrane-spanning segment. At 284–290 (NRIGGKN) the chain is on the cytoplasmic side. A helical transmembrane segment spans residues 291 to 309 (ALLLAGTIMSVRIIGSHSH). Topologically, residues 310–314 (TALEV) are periplasmic. A helical transmembrane segment spans residues 315-336 (VILKTLHMFEIPFLIVGCFKYI). Residues 337–347 (TSQFEVRFSAT) lie on the Cytoplasmic side of the membrane. Residues 348 to 368 (IYLVCFCFFKQLAMIFMSVLA) traverse the membrane as a helical segment. At 369–378 (GKMYESIGFQ) the chain is on the periplasmic side. The chain crosses the membrane as a helical span at residues 379–399 (GAYLVLGIIRVSFTLISVFTL). Residues 400–416 (SGPGPFSLLRRRESVAL) lie on the Cytoplasmic side of the membrane.

The protein belongs to the major facilitator superfamily. Oligosaccharide:H(+) symporter (OHS) (TC 2.A.1.5) family.

The protein localises to the cell inner membrane. The enzyme catalyses lactose(in) + H(+)(in) = lactose(out) + H(+)(out). Functionally, responsible for transport of beta-galactosides into the cell, with the concomitant import of a proton (symport system). This chain is Lactose permease (lacY), found in Citrobacter freundii.